The following is a 742-amino-acid chain: Phosphoribosylformylglycinamidine synthase subunit PurL (742 aa).

Histidine 54 is a catalytic residue. ATP is bound by residues tyrosine 57 and lysine 96. Glutamate 98 provides a ligand contact to Mg(2+). Residues 99–102 and arginine 121 each bind substrate; that span reads SHNH. Catalysis depends on histidine 100, which acts as the Proton acceptor. Residue aspartate 122 participates in Mg(2+) binding. Glutamine 245 provides a ligand contact to substrate. Aspartate 273 contacts Mg(2+). 317–319 lines the substrate pocket; sequence ESQ. Residues aspartate 500 and glycine 537 each coordinate ATP. Mg(2+) is bound at residue asparagine 538. Residue serine 540 participates in substrate binding.

The protein belongs to the FGAMS family. As to quaternary structure, monomer. Part of the FGAM synthase complex composed of 1 PurL, 1 PurQ and 2 PurS subunits.

The protein resides in the cytoplasm. The enzyme catalyses N(2)-formyl-N(1)-(5-phospho-beta-D-ribosyl)glycinamide + L-glutamine + ATP + H2O = 2-formamido-N(1)-(5-O-phospho-beta-D-ribosyl)acetamidine + L-glutamate + ADP + phosphate + H(+). The protein operates within purine metabolism; IMP biosynthesis via de novo pathway; 5-amino-1-(5-phospho-D-ribosyl)imidazole from N(2)-formyl-N(1)-(5-phospho-D-ribosyl)glycinamide: step 1/2. In terms of biological role, part of the phosphoribosylformylglycinamidine synthase complex involved in the purines biosynthetic pathway. Catalyzes the ATP-dependent conversion of formylglycinamide ribonucleotide (FGAR) and glutamine to yield formylglycinamidine ribonucleotide (FGAM) and glutamate. The FGAM synthase complex is composed of three subunits. PurQ produces an ammonia molecule by converting glutamine to glutamate. PurL transfers the ammonia molecule to FGAR to form FGAM in an ATP-dependent manner. PurS interacts with PurQ and PurL and is thought to assist in the transfer of the ammonia molecule from PurQ to PurL. In Oceanobacillus iheyensis (strain DSM 14371 / CIP 107618 / JCM 11309 / KCTC 3954 / HTE831), this protein is Phosphoribosylformylglycinamidine synthase subunit PurL.